The sequence spans 89 residues: Small ribosomal subunit protein uS15 (89 aa).

The protein belongs to the universal ribosomal protein uS15 family. Part of the 30S ribosomal subunit. Forms a bridge to the 50S subunit in the 70S ribosome, contacting the 23S rRNA.

One of the primary rRNA binding proteins, it binds directly to 16S rRNA where it helps nucleate assembly of the platform of the 30S subunit by binding and bridging several RNA helices of the 16S rRNA. Its function is as follows. Forms an intersubunit bridge (bridge B4) with the 23S rRNA of the 50S subunit in the ribosome. The protein is Small ribosomal subunit protein uS15 of Rippkaea orientalis (strain PCC 8801 / RF-1) (Cyanothece sp. (strain PCC 8801)).